We begin with the raw amino-acid sequence, 333 residues long: Tryptophan--tRNA ligase (333 aa).

Residues 9–11 (QPT) and 17–18 (GN) contribute to the ATP site. A 'HIGH' region motif is present at residues 10–18 (PTNNLTLGN). Aspartate 140 contacts L-tryptophan. Residues 152–154 (GQD), isoleucine 191, and 200–204 (KMSKS) each bind ATP. The short motif at 200–204 (KMSKS) is the 'KMSKS' region element.

Belongs to the class-I aminoacyl-tRNA synthetase family. In terms of assembly, homodimer.

It localises to the cytoplasm. It carries out the reaction tRNA(Trp) + L-tryptophan + ATP = L-tryptophyl-tRNA(Trp) + AMP + diphosphate + H(+). In terms of biological role, catalyzes the attachment of tryptophan to tRNA(Trp). The sequence is that of Tryptophan--tRNA ligase from Ureaplasma parvum serovar 3 (strain ATCC 700970).